Here is a 195-residue protein sequence, read N- to C-terminus: UDP-N-acetylbacillosamine N-acetyltransferase (195 aa).

Residues 13–15 (SGH), 35–36 (DD), and G56 contribute to the substrate site. The active-site Proton acceptor is H125. Acetyl-CoA is bound by residues H134, I155, and G173.

The protein belongs to the transferase hexapeptide repeat family. Homotrimer.

It carries out the reaction UDP-N-acetylbacillosamine + acetyl-CoA = UDP-N,N'-diacetylbacillosamine + CoA + H(+). It functions in the pathway protein modification; protein glycosylation. In terms of biological role, acetyltransferase that modifies the UDP-4-amino-sugar to form UDP-N,N'-diacetylbacillosamine in the N-linked protein glycosylation pathway. The sequence is that of UDP-N-acetylbacillosamine N-acetyltransferase (pglD) from Campylobacter jejuni subsp. jejuni serotype O:2 (strain ATCC 700819 / NCTC 11168).